We begin with the raw amino-acid sequence, 288 residues long: Orotidine 5'-phosphate decarboxylase (288 aa).

Lys-97 (proton donor) is an active-site residue.

It belongs to the OMP decarboxylase family. Type 2 subfamily.

It catalyses the reaction orotidine 5'-phosphate + H(+) = UMP + CO2. Its pathway is pyrimidine metabolism; UMP biosynthesis via de novo pathway; UMP from orotate: step 2/2. This chain is Orotidine 5'-phosphate decarboxylase, found in Clostridium tetani (strain Massachusetts / E88).